A 631-amino-acid polypeptide reads, in one-letter code: Dolichyl-diphosphooligosaccharide--protein glycosyltransferase subunit 2 (631 aa).

The N-terminal stretch at 1-22 is a signal peptide; the sequence is MAPPGSSAVFLLALTITASTQA. Topologically, residues 23–540 are lumenal; it reads LTPTHYLTKH…REPEKRPPTV (518 aa). N-linked (GlcNAc...) asparagine glycosylation is present at asparagine 106. A Glycyl lysine isopeptide (Lys-Gly) (interchain with G-Cter in ubiquitin) cross-link involves residue lysine 154. Residues 541–561 form a helical membrane-spanning segment; the sequence is VSNTFTALILSPLLLLFALWI. The Cytoplasmic portion of the chain corresponds to 562–571; that stretch reads RIGANVSNFT. A helical membrane pass occupies residues 572 to 592; it reads FAPSTVIFHLGHAAMLGLMYV. Residues 593-596 lie on the Lumenal side of the membrane; that stretch reads YWTQ. Residues 597 to 617 form a helical membrane-spanning segment; sequence LNMFQTLKYLAVLGTVTFLAG. Over 618–631 the chain is Cytoplasmic; the sequence is NRMLAQQAVKRTAH.

The protein belongs to the SWP1 family. Component of the oligosaccharyltransferase (OST) complex. OST exists in two different complex forms which contain common core subunits RPN1, RPN2, OST48, OST4, DAD1 and TMEM258, either STT3A or STT3B as catalytic subunits, and form-specific accessory subunits. STT3A complex assembly occurs through the formation of 3 subcomplexes. Subcomplex 1 contains RPN1 and TMEM258, subcomplex 2 contains the STT3A-specific subunits STT3A, DC2/OSTC, and KCP2 as well as the core subunit OST4, and subcomplex 3 contains RPN2, DAD1, and OST48. The STT3A complex can form stable complexes with the Sec61 complex or with both the Sec61 and TRAP complexes. Interacts with DDI2. Interacts with TMEM35A/NACHO.

It is found in the endoplasmic reticulum. The protein resides in the endoplasmic reticulum membrane. It functions in the pathway protein modification; protein glycosylation. Functionally, subunit of the oligosaccharyl transferase (OST) complex that catalyzes the initial transfer of a defined glycan (Glc(3)Man(9)GlcNAc(2) in eukaryotes) from the lipid carrier dolichol-pyrophosphate to an asparagine residue within an Asn-X-Ser/Thr consensus motif in nascent polypeptide chains, the first step in protein N-glycosylation. N-glycosylation occurs cotranslationally and the complex associates with the Sec61 complex at the channel-forming translocon complex that mediates protein translocation across the endoplasmic reticulum (ER). All subunits are required for a maximal enzyme activity. In Rattus norvegicus (Rat), this protein is Dolichyl-diphosphooligosaccharide--protein glycosyltransferase subunit 2.